The chain runs to 647 residues: DNA mismatch repair protein MutL (647 aa).

A disordered region spans residues 375–433; sequence KQEEPQAVKQPTQLWQPPKQEWQPPQSLVREEQSWQPSTKPIIEEPIQEEKSWDSNEEG. A compositionally biased stretch (low complexity) spans 387 to 400; sequence QLWQPPKQEWQPPQ.

It belongs to the DNA mismatch repair MutL/HexB family.

Its function is as follows. This protein is involved in the repair of mismatches in DNA. It is required for dam-dependent methyl-directed DNA mismatch repair. May act as a 'molecular matchmaker', a protein that promotes the formation of a stable complex between two or more DNA-binding proteins in an ATP-dependent manner without itself being part of a final effector complex. In Bacillus cereus (strain AH820), this protein is DNA mismatch repair protein MutL.